The chain runs to 80 residues: Nuclear protein 1 (80 aa).

The tract at residues 40-80 (GGRKGRTKREAAANTNRPSPGGHERKLLTKFQNSERKKAWR) is disordered. The span at 61–80 (GHERKLLTKFQNSERKKAWR) shows a compositional bias: basic and acidic residues. The Nuclear localization signal motif lies at 64–80 (RKLLTKFQNSERKKAWR).

Belongs to the NUPR family. Monomer. Directly interacts with MSL1 and binds MORF4L1, two components of histone acetyltransferase complex; the interaction with MORF4L1 may be mediated by MSL1. Interacts with EP300; this interaction enhances the effect of EP300 on PAX2 transcription factor activity. Interacts with PAXIP1; this interaction prevents PAXIP1 inhibition of PAX2 transcription factor activity. Interacts with COPS5; this interaction allows COPS5-dependent CDKN1B nuclear to cytoplasm translocation. Interacts with RNF2. Interacts with FOXO3; this interaction represses FOXO3 transactivation. Interacts with PTMA; regulates apoptotic process. Interacts with MYOD1, EP300 and DDX5; this interaction coordinates the association of anti-proliferative and pro-myogenic proteins at the myogenin promoter. Interacts with TP53; interaction is stress-dependent. Forms a complex with EP300 and TP53; this complex binds CDKN1A promoter leading to transcriptional induction of CDKN1A. Post-translationally, phosphorylated. Phosphorylation promotes DNA-binding activity. In terms of processing, acetylated. In terms of tissue distribution, strongly activated in pancreatic acinar cells during the acute phase of pancreatitis, in developing pancreas and during pancreatic regeneration.

It is found in the nucleus. It localises to the cytoplasm. The protein localises to the perinuclear region. Transcription regulator that converts stress signals into a program of gene expression that empowers cells with resistance to the stress induced by a change in their microenvironment. Thereby participates in the regulation of many processes namely cell-cycle, apoptosis, autophagy and DNA repair responses. Controls cell cycle progression and protects cells from genotoxic stress induced by doxorubicin through the complex formation with TP53 and EP300 that binds CDKN1A promoter leading to transcriptional induction of CDKN1A. Protects pancreatic cancer cells from stress-induced cell death by binding the RELB promoter and activating its transcription, leading to IER3 transactivation. Negatively regulates apoptosis through interaction with PTMA. Inhibits autophagy-induced apoptosis in cardiac cells through FOXO3 interaction, inducing cytoplasmic translocation of FOXO3 thereby preventing the FOXO3 association with the pro-autophagic BNIP3 promoter. Inhibits cell growth and facilitates programmed cell death by apoptosis after adriamycin-induced DNA damage through transactivation of TP53. Regulates methamphetamine-induced apoptosis and autophagy through DDIT3-mediated endoplasmic reticulum stress pathway. Participates in DNA repair following gamma-irradiation by facilitating DNA access of the transcription machinery through interaction with MSL1 leading to inhibition of histone H4' Lys-16' acetylation (H4K16ac). Coactivator of PAX2 transcription factor activity, both by recruiting the EP300 cofactor to increase PAX2 transcription factor activity and by binding PAXIP1 to suppress PAXIP1-induced inhibition on PAX2. Positively regulates cell cycle progression through interaction with COPS5 inducing cytoplasmic translocation of CDKN1B leading to the CDKN1B degradation. Coordinates, through its interaction with EP300, the assiociation of MYOD1, EP300 and DDX5 to the MYOG promoter, leading to inhibition of cell-cycle progression and myogenic differentiation promotion. Negatively regulates beta cell proliferation via inhibition of cell-cycle regulatory genes expression through the suppression of their promoter activities. Also required for LHB expression and ovarian maturation. Exacerbates CNS inflammation and demyelination upon cuprizone treatment. The sequence is that of Nuclear protein 1 from Rattus norvegicus (Rat).